Consider the following 107-residue polypeptide: Thioredoxin (107 aa).

Residues valine 2–lysine 107 form the Thioredoxin domain. Active-site nucleophile residues include cysteine 32 and cysteine 35. Cysteine 32 and cysteine 35 are oxidised to a cystine. S-nitrosocysteine occurs at positions 71 and 75.

This sequence belongs to the thioredoxin family. In terms of processing, may be nitrosylated on several cysteine residues, depending on the oxidation state. Nitrosylated Cys-75 may serve as donor for nitrosylation of target proteins.

It is found in the nucleus. It localises to the cytoplasm. The protein localises to the secreted. In terms of biological role, participates in various redox reactions through the reversible oxidation of its active center dithiol to a disulfide and catalyzes dithiol-disulfide exchange reactions. Plays a role in the reversible S-nitrosylation of cysteine residues in target proteins, and thereby contributes to the response to intracellular nitric oxide. Nitrosylates the active site Cys of CASP3 in response to nitric oxide (NO), and thereby inhibits caspase-3 activity. Induces the FOS/JUN AP-1 DNA binding activity in ionizing radiation (IR) cells through its oxidation/reduction status and stimulates AP-1 transcriptional activity. The polypeptide is Thioredoxin (txn) (Ictalurus punctatus (Channel catfish)).